The following is a 126-amino-acid chain: Holo-[acyl-carrier-protein] synthase (126 aa).

Residues aspartate 9 and glutamate 57 each coordinate Mg(2+).

The protein belongs to the P-Pant transferase superfamily. AcpS family. Requires Mg(2+) as cofactor.

The protein localises to the cytoplasm. The enzyme catalyses apo-[ACP] + CoA = holo-[ACP] + adenosine 3',5'-bisphosphate + H(+). Its function is as follows. Transfers the 4'-phosphopantetheine moiety from coenzyme A to a Ser of acyl-carrier-protein. The chain is Holo-[acyl-carrier-protein] synthase from Idiomarina loihiensis (strain ATCC BAA-735 / DSM 15497 / L2-TR).